Reading from the N-terminus, the 179-residue chain is Large ribosomal subunit protein uL6 (179 aa).

This sequence belongs to the universal ribosomal protein uL6 family. As to quaternary structure, part of the 50S ribosomal subunit.

In terms of biological role, this protein binds to the 23S rRNA, and is important in its secondary structure. It is located near the subunit interface in the base of the L7/L12 stalk, and near the tRNA binding site of the peptidyltransferase center. The chain is Large ribosomal subunit protein uL6 from Spiroplasma citri.